A 273-amino-acid chain; its full sequence is Tryptophan synthase alpha chain (273 aa).

Residues glutamate 49 and aspartate 60 each act as proton acceptor in the active site.

This sequence belongs to the TrpA family. Tetramer of two alpha and two beta chains.

The catalysed reaction is (1S,2R)-1-C-(indol-3-yl)glycerol 3-phosphate + L-serine = D-glyceraldehyde 3-phosphate + L-tryptophan + H2O. It participates in amino-acid biosynthesis; L-tryptophan biosynthesis; L-tryptophan from chorismate: step 5/5. Its function is as follows. The alpha subunit is responsible for the aldol cleavage of indoleglycerol phosphate to indole and glyceraldehyde 3-phosphate. The polypeptide is Tryptophan synthase alpha chain (Thiobacillus denitrificans (strain ATCC 25259 / T1)).